Reading from the N-terminus, the 401-residue chain is Deacetoxyvindoline 4-hydroxylase (401 aa).

In terms of domain architecture, Fe2OG dioxygenase spans 242–345 (CAEGLILLGH…SVAVAFGIKT (104 aa)). Fe cation contacts are provided by H268, D270, and H324. Residue R334 participates in 2-oxoglutarate binding.

The protein belongs to the iron/ascorbate-dependent oxidoreductase family. Monomer. It depends on Fe cation as a cofactor. L-ascorbate serves as cofactor. As to expression, highest levels in leaves, lower levels in stems and fruits. Not expressed in flowers and roots.

It is found in the cytoplasm. The protein resides in the nucleus. It carries out the reaction deacetoxyvindoline + 2-oxoglutarate + O2 = 4-O-deacetylvindoline + succinate + CO2. It participates in alkaloid biosynthesis; vindoline biosynthesis. Functionally, catalyzes the C4-hydroxylation of desacetoxyvindoline. This Catharanthus roseus (Madagascar periwinkle) protein is Deacetoxyvindoline 4-hydroxylase.